Reading from the N-terminus, the 373-residue chain is Queuine tRNA-ribosyltransferase (373 aa).

Residue Asp-93 is the Proton acceptor of the active site. Substrate contacts are provided by residues 93–97 (DSGGF), Asp-147, Gln-190, and Gly-219. Residues 250-256 (GVGEPVD) form an RNA binding region. The active-site Nucleophile is Asp-269. Residues 274–278 (TRLAR) form an RNA binding; important for wobble base 34 recognition region. Residues Cys-307, Cys-309, Cys-312, and His-338 each contribute to the Zn(2+) site.

The protein belongs to the queuine tRNA-ribosyltransferase family. As to quaternary structure, homodimer. Within each dimer, one monomer is responsible for RNA recognition and catalysis, while the other monomer binds to the replacement base PreQ1. Zn(2+) serves as cofactor.

The catalysed reaction is 7-aminomethyl-7-carbaguanine + guanosine(34) in tRNA = 7-aminomethyl-7-carbaguanosine(34) in tRNA + guanine. The protein operates within tRNA modification; tRNA-queuosine biosynthesis. In terms of biological role, catalyzes the base-exchange of a guanine (G) residue with the queuine precursor 7-aminomethyl-7-deazaguanine (PreQ1) at position 34 (anticodon wobble position) in tRNAs with GU(N) anticodons (tRNA-Asp, -Asn, -His and -Tyr). Catalysis occurs through a double-displacement mechanism. The nucleophile active site attacks the C1' of nucleotide 34 to detach the guanine base from the RNA, forming a covalent enzyme-RNA intermediate. The proton acceptor active site deprotonates the incoming PreQ1, allowing a nucleophilic attack on the C1' of the ribose to form the product. After dissociation, two additional enzymatic reactions on the tRNA convert PreQ1 to queuine (Q), resulting in the hypermodified nucleoside queuosine (7-(((4,5-cis-dihydroxy-2-cyclopenten-1-yl)amino)methyl)-7-deazaguanosine). In Fusobacterium nucleatum subsp. nucleatum (strain ATCC 25586 / DSM 15643 / BCRC 10681 / CIP 101130 / JCM 8532 / KCTC 2640 / LMG 13131 / VPI 4355), this protein is Queuine tRNA-ribosyltransferase.